The sequence spans 248 residues: Ribosomal RNA small subunit methyltransferase G (248 aa).

Residues Gly-85, Phe-90, 108–110, 137–138, and Arg-156 contribute to the S-adenosyl-L-methionine site; these read DSS and AE.

It belongs to the methyltransferase superfamily. RNA methyltransferase RsmG family.

The protein resides in the cytoplasm. Functionally, specifically methylates the N7 position of a guanine in 16S rRNA. In Prochlorococcus marinus (strain NATL1A), this protein is Ribosomal RNA small subunit methyltransferase G.